The sequence spans 246 residues: U11/U12 small nuclear ribonucleoprotein 35 kDa protein (246 aa).

One can recognise an RRM domain in the interval 51-129 (LTLFVARLNL…HEIFVDYELE (79 aa)). Residue Lys-172 forms a Glycyl lysine isopeptide (Lys-Gly) (interchain with G-Cter in SUMO2) linkage. The segment at 187–217 (SRSRERHWDSRTRDRDHDRGREKRWQEREPT) is disordered. The segment covering 192–217 (RHWDSRTRDRDHDRGREKRWQEREPT) has biased composition (basic and acidic residues).

In terms of assembly, component of the U11/U12 snRNPs that are part of the U12-type spliceosome. As to expression, expressed in heart, liver, skeletal muscle and pancreas.

Its subcellular location is the nucleus. This Homo sapiens (Human) protein is U11/U12 small nuclear ribonucleoprotein 35 kDa protein (SNRNP35).